Consider the following 108-residue polypeptide: Nucleoid-associated protein Rmet_2128 (108 aa).

Residues Thr-86–Ser-96 are compositionally biased toward polar residues. The segment at Thr-86–Phe-108 is disordered. Pro residues predominate over residues Pro-99–Phe-108.

It belongs to the YbaB/EbfC family. As to quaternary structure, homodimer.

It is found in the cytoplasm. The protein localises to the nucleoid. In terms of biological role, binds to DNA and alters its conformation. May be involved in regulation of gene expression, nucleoid organization and DNA protection. This is Nucleoid-associated protein Rmet_2128 from Cupriavidus metallidurans (strain ATCC 43123 / DSM 2839 / NBRC 102507 / CH34) (Ralstonia metallidurans).